A 447-amino-acid chain; its full sequence is MREILHIQGGQCGNQIGAKFWEVICGEHCVDSTGRYSGTSSQQLELERINVYYNEAGGGRYVPRAVLMDLEPGTMESIRAGPFGGIFRPDNFVYGQSGAGNNWAKGHYTEGAELIDSVLDVVRKEAENCDCLQGFQVCHSLGGGTGSGMGTLLISKIREEYPDRMMLTFSVFPSPKVSDTVVEPYNATLSVHQLVENADECMVLDNEALYDICFRTLKLTNPSFGDLNHLISATMSGVTCCLRFPGQLNSDLRKLAVNLIPFPRLHFFMVGFAPLTSRGSQQYRALTVPELTQQMWDAKNMMCSADPRHGRYLTASAMFRGKMSTKEVDEQMINVQNKNSSYFVEWIPNNVKSSVCDIPPVGLPMASTFVGNSTSIQEMFRRVSEQFTAMFRRKAFLHWYTSEGMDEMEFTEAESNMNDLVAEYQQYQDATAEEYEEEEHDGEEEHA.

GTP contacts are provided by Gln11, Glu71, Ser140, Gly144, Thr145, Gly146, Asn206, and Asn228. Mg(2+) is bound at residue Glu71. Residues 428 to 447 (QDATAEEYEEEEHDGEEEHA) are disordered. The segment covering 431–447 (TAEEYEEEEHDGEEEHA) has biased composition (acidic residues).

This sequence belongs to the tubulin family. Dimer of alpha and beta chains. A typical microtubule is a hollow water-filled tube with an outer diameter of 25 nm and an inner diameter of 15 nM. Alpha-beta heterodimers associate head-to-tail to form protofilaments running lengthwise along the microtubule wall with the beta-tubulin subunit facing the microtubule plus end conferring a structural polarity. Microtubules usually have 13 protofilaments but different protofilament numbers can be found in some organisms and specialized cells. It depends on Mg(2+) as a cofactor.

Its subcellular location is the cytoplasm. The protein localises to the cytoskeleton. Its function is as follows. Tubulin is the major constituent of microtubules, a cylinder consisting of laterally associated linear protofilaments composed of alpha- and beta-tubulin heterodimers. Microtubules grow by the addition of GTP-tubulin dimers to the microtubule end, where a stabilizing cap forms. Below the cap, tubulin dimers are in GDP-bound state, owing to GTPase activity of alpha-tubulin. The chain is Tubulin beta-4 chain (TUBB4) from Zea mays (Maize).